We begin with the raw amino-acid sequence, 152 residues long: Acidic phospholipase A2 homolog taipoxin gamma chain (152 aa).

The signal sequence occupies residues 1 to 19 (MHPAHLLVLLAVCVSLLGS). Cystine bridges form between cysteine 38–cysteine 104, cysteine 42–cysteine 46, cysteine 54–cysteine 151, cysteine 56–cysteine 72, cysteine 71–cysteine 132, cysteine 78–cysteine 125, cysteine 88–cysteine 118, and cysteine 111–cysteine 123. The N-linked (GlcNAc...) asparagine glycan is linked to asparagine 97.

It belongs to the phospholipase A2 family. Group I subfamily. D49 sub-subfamily. As to quaternary structure, heterotrimer of alpha, beta, and gamma chains; non-covalently linked. Contains 0.9% fucose, 2.2% mannose, 4.2% N-acetyl-D-glucosamine, 3.5% galactose, and 3.8% N-acetyl-neuraminic acid (sialic acid). As to expression, expressed by the venom gland.

The protein localises to the secreted. Functionally, heterotrimer: Snake venom phospholipase A2 (PLA2) heterotrimer that acts as a potent presynaptic neurotoxin by blocking synaptic transmission and synaptic vesicle recycling. May act by binding in a calcium-dependent fashion to neurotonal pentraxin-1 (NPTX1) and neurotonal pentraxin-2 (NPTX2), but not to neuronal pentraxin receptor (NPTXR). Also binds to taipoxin-associated calcium binding protein 49 (RCN2), a protein localized in the lumen of endoplasmic reticulum. In terms of biological role, monomer (gamma chain): Snake venom phospholipase A2 homolog that is neither toxic nor enzymatically active. Does not bind calcium. This Oxyuranus scutellatus scutellatus (Australian taipan) protein is Acidic phospholipase A2 homolog taipoxin gamma chain.